Here is a 174-residue protein sequence, read N- to C-terminus: 3-hydroxydecanoyl-[acyl-carrier-protein] dehydratase (174 aa).

H73 is a catalytic residue.

Belongs to the thioester dehydratase family. FabA subfamily. Homodimer.

The protein localises to the cytoplasm. It carries out the reaction a (3R)-hydroxyacyl-[ACP] = a (2E)-enoyl-[ACP] + H2O. It catalyses the reaction (3R)-hydroxydecanoyl-[ACP] = (2E)-decenoyl-[ACP] + H2O. The enzyme catalyses (2E)-decenoyl-[ACP] = (3Z)-decenoyl-[ACP]. The protein operates within lipid metabolism; fatty acid biosynthesis. Functionally, necessary for the introduction of cis unsaturation into fatty acids. Catalyzes the dehydration of (3R)-3-hydroxydecanoyl-ACP to E-(2)-decenoyl-ACP and then its isomerization to Z-(3)-decenoyl-ACP. Can catalyze the dehydratase reaction for beta-hydroxyacyl-ACPs with saturated chain lengths up to 16:0, being most active on intermediate chain length. The chain is 3-hydroxydecanoyl-[acyl-carrier-protein] dehydratase from Cellvibrio japonicus (strain Ueda107) (Pseudomonas fluorescens subsp. cellulosa).